The sequence spans 254 residues: MKIDLNCDLGEGFGVWQMGDDAAMMQIATSVNIACGFHAGDPDIMHATVKLAKQNGVAIGAHPGFRDLHGFGRRPVPGITAAEIENLVAYQIGALQAVAALAGHKVTHVKAHGALSNVACEDDMTARAIASAIKAVDPSLVFVVLANSKLMLAGEAAGLPLAHEVFADRAYEDDGNLVSRKKPGAVLHDPNEIAERVLRMAQDGAVVSVTGKVIKMRTDTVCIHGDTKGAVEIARGVRRKLEASGITVAPFAGT.

Belongs to the LamB/PxpA family. Forms a complex composed of PxpA, PxpB and PxpC.

The catalysed reaction is 5-oxo-L-proline + ATP + 2 H2O = L-glutamate + ADP + phosphate + H(+). Functionally, catalyzes the cleavage of 5-oxoproline to form L-glutamate coupled to the hydrolysis of ATP to ADP and inorganic phosphate. The protein is 5-oxoprolinase subunit A of Rhodopseudomonas palustris (strain ATCC BAA-98 / CGA009).